The sequence spans 466 residues: Benzoate transport protein (466 aa).

Residues 1–22 (MSREINVNQMIDDSKLTPFHWR) are Cytoplasmic-facing. Residues 23-43 (VIILSTLIIIFDGYDLVIYGV) form a helical membrane-spanning segment. The Periplasmic segment spans residues 44 to 60 (ALPLLMKEWAIDPVTAG). Residues 61-81 (FIGSIALFGMMFGALIFGTIA) traverse the membrane as a helical segment. Residues 82-93 (DKLEHLGVSRKK) are Cytoplasmic-facing. A helical transmembrane segment spans residues 94–114 (VIAVCIILFSLCTVLCGFSET). The Periplasmic segment spans residues 115–119 (TTQFS). Residues 120-140 (IFRFLAGVGIGGVMPNVIALV) traverse the membrane as a helical segment. Topologically, residues 141 to 150 (SEYAPKKFKS) are cytoplasmic. Residues 151–171 (FFVTLMFSGYAIGGMTAAFLG) traverse the membrane as a helical segment. Residues 172-181 (SILVPLYGWK) lie on the Periplasmic side of the membrane. A helical transmembrane segment spans residues 182–202 (IMFMIAGIPLVLLLPLMKVLP). Over 203 to 258 (ESIDYLVRKKKDETVRFIMTKMVPSYQYQPDHVFVLNSSNQNQAQAPVKMIFQEQR) the chain is Cytoplasmic. Residues 259 to 279 (AFSTMMFWCSIFMTLIMVYAL) form a helical membrane-spanning segment. At 280–297 (GNWLPKLMIEAGYNLSKS) the chain is on the periplasmic side. A helical membrane pass occupies residues 298–318 (LIFLFSLNVGGMIGSILGGYL). Residues 319–325 (ADRYNVK) are Cytoplasmic-facing. Residues 326–346 (FVTMGLLLLGAISLSLLSFQF) form a helical membrane-spanning segment. The Periplasmic segment spans residues 347 to 348 (SS). A helical membrane pass occupies residues 349–369 (VILYILIACAGAASIGAQIML). The Cytoplasmic portion of the chain corresponds to 370–387 (LAYMAKFYAPNVRSTGIG). A helical membrane pass occupies residues 388-408 (WGLGMGRVGAILGPILTGWLL). At 409–414 (SLQLPH) the chain is on the periplasmic side. A helical transmembrane segment spans residues 415–435 (FYNFLALSIPAVLGIVTVFLI). The Cytoplasmic segment spans residues 436 to 466 (NDRRMYQPEPISPIANQNDTTTVKVNEAVSH).

The protein belongs to the major facilitator superfamily. Aromatic acid:H(+) symporter (AAHS) (TC 2.A.1.15) family.

It localises to the cell inner membrane. Functionally, probable uptake of benzoate. This is Benzoate transport protein (benK) from Acinetobacter baylyi (strain ATCC 33305 / BD413 / ADP1).